Here is a 101-residue protein sequence, read N- to C-terminus: uncharacterized protein (101 aa).

The chain crosses the membrane as a helical span at residues 77-99; the sequence is VFSFMNGFTDGCICGTIIILCLI.

Its subcellular location is the membrane. This is an uncharacterized protein from Acanthamoeba polyphaga mimivirus (APMV).